The primary structure comprises 322 residues: Ferrochelatase (322 aa).

Fe cation is bound by residues His194 and Glu275.

This sequence belongs to the ferrochelatase family.

It localises to the cytoplasm. The enzyme catalyses heme b + 2 H(+) = protoporphyrin IX + Fe(2+). It participates in porphyrin-containing compound metabolism; protoheme biosynthesis; protoheme from protoporphyrin-IX: step 1/1. Functionally, catalyzes the ferrous insertion into protoporphyrin IX. This chain is Ferrochelatase, found in Yersinia enterocolitica serotype O:8 / biotype 1B (strain NCTC 13174 / 8081).